The following is a 448-amino-acid chain: Zinc finger and BTB domain-containing protein 14 (448 aa).

Residues C36–K102 form the BTB domain. The short motif at H50–K66 is the Nuclear localization signal element. Residues V130 to T193 form a disordered region. The segment covering D156–D167 has biased composition (acidic residues). 5 C2H2-type zinc fingers span residues I275–P302, F303–P330, Y331–P358, F359–P386, and F387–Q415. A compositionally biased stretch (basic and acidic residues) spans R404–Q415. A disordered region spans residues R404–E425. Over residues V416 to E425 the composition is skewed to polar residues.

Belongs to the krueppel C2H2-type zinc-finger protein family. As to quaternary structure, interacts with ZBTB21.

The protein resides in the nucleus. Transcriptional activator of the dopamine transporter (DAT), binding it's promoter at the consensus sequence 5'-CCTGCACAGTTCACGGA-3'. Binds to 5'-d(GCC)(n)-3' trinucleotide repeats in promoter regions and acts as a repressor of the FMR1 gene. Transcriptional repressor of MYC and thymidine kinase promoters. The polypeptide is Zinc finger and BTB domain-containing protein 14 (ZBTB14) (Gallus gallus (Chicken)).